The chain runs to 179 residues: Large ribosomal subunit protein uL6 (179 aa).

The protein belongs to the universal ribosomal protein uL6 family. As to quaternary structure, part of the 50S ribosomal subunit.

This protein binds to the 23S rRNA, and is important in its secondary structure. It is located near the subunit interface in the base of the L7/L12 stalk, and near the tRNA binding site of the peptidyltransferase center. In Koribacter versatilis (strain Ellin345), this protein is Large ribosomal subunit protein uL6.